The chain runs to 304 residues: Glycine--tRNA ligase alpha subunit (304 aa).

It belongs to the class-II aminoacyl-tRNA synthetase family. As to quaternary structure, tetramer of two alpha and two beta subunits.

The protein resides in the cytoplasm. It carries out the reaction tRNA(Gly) + glycine + ATP = glycyl-tRNA(Gly) + AMP + diphosphate. The chain is Glycine--tRNA ligase alpha subunit from Streptococcus agalactiae serotype III (strain NEM316).